Here is a 62-residue protein sequence, read N- to C-terminus: Photosystem II reaction center protein Z (62 aa).

A run of 2 helical transmembrane segments spans residues 8–28 (AVFALIATSSILLISVPVVFA) and 41–61 (FSGTSLWLGLVFLVGILNSLI).

This sequence belongs to the PsbZ family. In terms of assembly, PSII is composed of 1 copy each of membrane proteins PsbA, PsbB, PsbC, PsbD, PsbE, PsbF, PsbH, PsbI, PsbJ, PsbK, PsbL, PsbM, PsbT, PsbY, PsbZ, Psb30/Ycf12, at least 3 peripheral proteins of the oxygen-evolving complex and a large number of cofactors. It forms dimeric complexes.

The protein resides in the plastid. Its subcellular location is the chloroplast thylakoid membrane. May control the interaction of photosystem II (PSII) cores with the light-harvesting antenna, regulates electron flow through the 2 photosystem reaction centers. PSII is a light-driven water plastoquinone oxidoreductase, using light energy to abstract electrons from H(2)O, generating a proton gradient subsequently used for ATP formation. This Spinacia oleracea (Spinach) protein is Photosystem II reaction center protein Z.